A 338-amino-acid chain; its full sequence is Ketol-acid reductoisomerase (NADP(+)) (338 aa).

Positions 1–181 (MKVYYDKDAD…GGTKGGVIET (181 aa)) constitute a KARI N-terminal Rossmann domain. NADP(+)-binding positions include 24-27 (YGSQ), Arg47, Ser52, and 82-85 (DESQ). His107 is an active-site residue. An NADP(+)-binding site is contributed by Gly133. The KARI C-terminal knotted domain occupies 182-327 (NFREETETDL…AELRAMMPWI (146 aa)). The Mg(2+) site is built by Asp190, Glu194, Glu226, and Glu230. Residue Ser251 participates in substrate binding.

This sequence belongs to the ketol-acid reductoisomerase family. The cofactor is Mg(2+).

It catalyses the reaction (2R)-2,3-dihydroxy-3-methylbutanoate + NADP(+) = (2S)-2-acetolactate + NADPH + H(+). The enzyme catalyses (2R,3R)-2,3-dihydroxy-3-methylpentanoate + NADP(+) = (S)-2-ethyl-2-hydroxy-3-oxobutanoate + NADPH + H(+). It functions in the pathway amino-acid biosynthesis; L-isoleucine biosynthesis; L-isoleucine from 2-oxobutanoate: step 2/4. It participates in amino-acid biosynthesis; L-valine biosynthesis; L-valine from pyruvate: step 2/4. Its function is as follows. Involved in the biosynthesis of branched-chain amino acids (BCAA). Catalyzes an alkyl-migration followed by a ketol-acid reduction of (S)-2-acetolactate (S2AL) to yield (R)-2,3-dihydroxy-isovalerate. In the isomerase reaction, S2AL is rearranged via a Mg-dependent methyl migration to produce 3-hydroxy-3-methyl-2-ketobutyrate (HMKB). In the reductase reaction, this 2-ketoacid undergoes a metal-dependent reduction by NADPH to yield (R)-2,3-dihydroxy-isovalerate. This is Ketol-acid reductoisomerase (NADP(+)) from Chromobacterium violaceum (strain ATCC 12472 / DSM 30191 / JCM 1249 / CCUG 213 / NBRC 12614 / NCIMB 9131 / NCTC 9757 / MK).